Reading from the N-terminus, the 424-residue chain is Adenylosuccinate synthetase (424 aa).

GTP contacts are provided by residues 12-18 (GDEGKGK) and 40-42 (GHT). Aspartate 13 (proton acceptor) is an active-site residue. Mg(2+) contacts are provided by aspartate 13 and glycine 40. IMP-binding positions include 13–16 (DEGK), 38–41 (NAGH), threonine 130, arginine 144, asparagine 220, threonine 235, and arginine 299. Residue histidine 41 is the Proton donor of the active site. 295–301 (VTTGRRR) provides a ligand contact to substrate. GTP is bound by residues arginine 301, 327–329 (KLD), and 412–414 (GTG).

Belongs to the adenylosuccinate synthetase family. In terms of assembly, homodimer. Mg(2+) serves as cofactor.

Its subcellular location is the cytoplasm. The catalysed reaction is IMP + L-aspartate + GTP = N(6)-(1,2-dicarboxyethyl)-AMP + GDP + phosphate + 2 H(+). It participates in purine metabolism; AMP biosynthesis via de novo pathway; AMP from IMP: step 1/2. Plays an important role in the de novo pathway and in the salvage pathway of purine nucleotide biosynthesis. Catalyzes the first committed step in the biosynthesis of AMP from IMP. The chain is Adenylosuccinate synthetase from Aspergillus fumigatus (strain CBS 144.89 / FGSC A1163 / CEA10) (Neosartorya fumigata).